Reading from the N-terminus, the 120-residue chain is cAMP-responsive element-binding protein-like 2 (120 aa).

Residues 1–24 (MDDSKVVGGKVKKPGKRGRKPAKI) form a disordered region. Basic residues predominate over residues 10–21 (KVKKPGKRGRKP). The region spanning 23–86 (KIDLKAKLER…MAMDQGKIPS (64 aa)) is the bZIP domain. Residues 29 to 60 (KLERSRQSARECRARKKLRYQYLEELVSSRER) are basic motif. Residues 62-69 (ICALREEL) are leucine-zipper. Residues 93–120 (TGEEQNKSQQNSSRHTKAGKTDANSNSW) are disordered.

It belongs to the bZIP family. ATF subfamily. Interacts with CREB1; regulates CREB1 phosphorylation, stability and transcriptional activity. In terms of processing, phosphorylated by AMPK.

The protein localises to the nucleus. Functionally, probable regulator of CREB1 transcriptional activity which is involved in adipose cells differentiation. May also play a regulatory role in the cell cycle. Identification in a chromosomal region frequently deleted in various cancers suggests that it might act as a tumor suppressor. This Homo sapiens (Human) protein is cAMP-responsive element-binding protein-like 2 (CREBL2).